Consider the following 457-residue polypeptide: MSFVNVAPQLVSTAAADAARIGSAINTANTAAAATTQVLAAAHDEVSTAIAALFGSHGQHYQAISAQVAAYQERFVLALSQASSTYAVAEAASATPLQNVLDAINAPVQSLTGRPLIGDGANGIDGTGQAGGNGGWLWGNGGNGGSGAPGQAGGAGGAAGLIGNGGAGGAGGQGLPFEAGANGGAGGAGGWLFGNGGAGGVGGAGGAGTTFGVAGGDGGTGGVGGHGGLIGVGGHGGDGGTGGTGGAVSLARAGTAGGAGGGPAGGIGGAGGVGGAGGAAGAVTTITHASFNDPHGVAVNPGGNIYVTNQGSNTVSVIDPVTNTVTGSITDGNGPSGVAVSPVTGLVFVTNFDSNTVSVIDPNTNTVTGSIPVGTGAYGVAVNPGGNIYVTNQFSNTVSVIDPATNTVTGSPIPVGLDPTGVAVNPVTGVVYVTNSLDDTVSVITGEPARSVCSAAI.

The PE domain maps to 1–92 (MSFVNVAPQL…SSTYAVAEAA (92 aa)). NHL repeat units follow at residues 291–321 (FNDPHGVAVNPGGNIYVTNQGSNTVSVIDPV), 333–363 (NGPSGVAVSPVTGLVFVTNFDSNTVSVIDPN), 379–404 (GVAVNPGGNIYVTNQFSNTVSVIDPA), and 419–447 (PTGVAVNPVTGVVYVTNSLDDTVSVITGE).

Belongs to the mycobacterial PE family. PGRS subfamily.

It is found in the secreted. It localises to the cell wall. Functionally, enhances mycobacterial intracellular survival, probably via altering host macrophage cytokine profiling and attenuating the cell apoptosis. Could be required for host endothelial-cell invasion. Expression in Mycobacterium smegmatis, a nonpathogenic species naturally deficient in PE_PGRS genes, results in alteration of the production of host cytokines, including IL-6, IL-1beta, IL-10 and IL-12p40, as well as enhanced survival within macrophages largely via attenuating the apoptosis of macrophages. The protein is PE-PGRS family protein PE_PGRS18 of Mycobacterium tuberculosis (strain ATCC 25618 / H37Rv).